Consider the following 127-residue polypeptide: Aspartate 1-decarboxylase (127 aa).

The active-site Schiff-base intermediate with substrate; via pyruvic acid is Ser-25. At Ser-25 the chain carries Pyruvic acid (Ser). Thr-57 contacts substrate. Residue Tyr-58 is the Proton donor of the active site. Gly-73–Ala-75 contributes to the substrate binding site.

It belongs to the PanD family. In terms of assembly, heterooctamer of four alpha and four beta subunits. Pyruvate is required as a cofactor. In terms of processing, is synthesized initially as an inactive proenzyme, which is activated by self-cleavage at a specific serine bond to produce a beta-subunit with a hydroxyl group at its C-terminus and an alpha-subunit with a pyruvoyl group at its N-terminus.

It is found in the cytoplasm. The catalysed reaction is L-aspartate + H(+) = beta-alanine + CO2. It functions in the pathway cofactor biosynthesis; (R)-pantothenate biosynthesis; beta-alanine from L-aspartate: step 1/1. Its function is as follows. Catalyzes the pyruvoyl-dependent decarboxylation of aspartate to produce beta-alanine. This is Aspartate 1-decarboxylase from Bacillus pumilus (strain SAFR-032).